The following is a 662-amino-acid chain: PsbB mRNA maturation factor Mbb1, chloroplastic (662 aa).

Residues 1–50 (MSLVPFSQLWRGVRTRGPVEQASSSSSSSSSSRRTWYAPARSQTGVQVAA) constitute a chloroplast transit peptide. Disordered stretches follow at residues 14 to 38 (RTRG…TWYA) and 75 to 101 (IIAD…RDEA). Residues 23-32 (SSSSSSSSSS) show a composition bias toward low complexity. Residues 88-101 (EGERGDATGSRDEA) show a composition bias toward basic and acidic residues. 10 TPR repeats span residues 126–160 (SRIR…DPAD), 161–194 (PRAY…TGNV), 196–229 (PYIW…DGTH), 231–263 (CAWH…CRRK), 269–302 (AYLY…AEGA), 305–338 (VALW…NPRS), 339–372 (RYVH…NPTD), 373–406 (PALY…DPSD), 408–440 (YMWQ…DPRS), and 444–477 (VYVF…DPKS). Disordered regions lie at residues 540–563 (SDGN…EAAA) and 598–662 (LPDF…RSMG).

Part of a 300 kDa complex that associates with RNA.

The protein resides in the plastid. Its subcellular location is the chloroplast stroma. Involved, directly or indirectly, in the processing of the chloroplast encoded psbB mRNA to its mature form, acting via the 5'-UTR of the psbB mRNA. This Chlamydomonas reinhardtii (Chlamydomonas smithii) protein is PsbB mRNA maturation factor Mbb1, chloroplastic (MBB1).